The sequence spans 55 residues: Protein CADMIUM TOLERANCE 2 (55 aa).

A helical transmembrane segment spans residues 24 to 40 (GCLYACIFTALCCFCCY).

It belongs to the CYSTM1 family. As to expression, expressed only in roots.

The protein localises to the cell membrane. Its subcellular location is the secreted. It is found in the cell wall. Confers resistance to heavy metal ions (e.g. cadmium (CdCl(2)) and copper (CuCl(2))) by chelating them at the plasma membrane of root cells, thus stopping their entry and reducing their accumulation. This chain is Protein CADMIUM TOLERANCE 2, found in Oryza sativa subsp. japonica (Rice).